The sequence spans 354 residues: MNILERAALTALHRMDPEKAHSLSLSALRSGLVPLPGPVTSSRLATDVGGLVLPNPVGLAAGYDKNAVALAALMRAGFGFLEVGAATPRPQPGNPQPRLFRLTEDRAAINRFGFNNDGAATICARLAMRPRGAVPVGLNLGANKDSPDRAADFAAVLAACGPHADFATVNVSSPNTERLRDLQGRQALTALLEGVMQVQAGFARPVPVFLKIAPDLSDADLAEIAEVALASGIAGIVATNTTLARDGLRSAHARETGGLSGAPLFERSTRVLARLSELTEGRLPLIGVGGVASAEEAYAKIRAGASAVQLYTAMVYQGIGLAARIARGLDALLLRDGFGSVAEAVGTGRADWLT.

Residues 61-65 (AGYDK) and Ala-85 contribute to the FMN site. Lys-65 contributes to the substrate binding site. Position 110–114 (110–114 (NRFGF)) interacts with substrate. FMN contacts are provided by Asn-139 and Asn-170. Asn-170 serves as a coordination point for substrate. Residue Ser-173 is the Nucleophile of the active site. Asn-175 contacts substrate. Lys-211 and Thr-239 together coordinate FMN. 240–241 (NT) provides a ligand contact to substrate. FMN-binding positions include Gly-261, Gly-290, and 311–312 (YT).

Belongs to the dihydroorotate dehydrogenase family. Type 2 subfamily. In terms of assembly, monomer. The cofactor is FMN.

The protein resides in the cell membrane. It catalyses the reaction (S)-dihydroorotate + a quinone = orotate + a quinol. It functions in the pathway pyrimidine metabolism; UMP biosynthesis via de novo pathway; orotate from (S)-dihydroorotate (quinone route): step 1/1. Catalyzes the conversion of dihydroorotate to orotate with quinone as electron acceptor. This chain is Dihydroorotate dehydrogenase (quinone), found in Cereibacter sphaeroides (strain KD131 / KCTC 12085) (Rhodobacter sphaeroides).